Consider the following 441-residue polypeptide: ACT domain-containing protein ACR8 (441 aa).

4 consecutive ACT domains span residues 34-110 (IVKV…NIEV), 115-196 (ALEL…SAAK), 248-324 (VVNV…ALEG), and 326-405 (RLEL…TMYH).

As to expression, expressed in roots, leaves, flowers and siliques.

Functionally, may bind amino acids. This Arabidopsis thaliana (Mouse-ear cress) protein is ACT domain-containing protein ACR8.